We begin with the raw amino-acid sequence, 287 residues long: Bifunctional protein FolD (287 aa).

Residues 166 to 168 (GAS) and isoleucine 232 contribute to the NADP(+) site.

The protein belongs to the tetrahydrofolate dehydrogenase/cyclohydrolase family. Homodimer.

The catalysed reaction is (6R)-5,10-methylene-5,6,7,8-tetrahydrofolate + NADP(+) = (6R)-5,10-methenyltetrahydrofolate + NADPH. It catalyses the reaction (6R)-5,10-methenyltetrahydrofolate + H2O = (6R)-10-formyltetrahydrofolate + H(+). It functions in the pathway one-carbon metabolism; tetrahydrofolate interconversion. Its function is as follows. Catalyzes the oxidation of 5,10-methylenetetrahydrofolate to 5,10-methenyltetrahydrofolate and then the hydrolysis of 5,10-methenyltetrahydrofolate to 10-formyltetrahydrofolate. This Aeromonas hydrophila subsp. hydrophila (strain ATCC 7966 / DSM 30187 / BCRC 13018 / CCUG 14551 / JCM 1027 / KCTC 2358 / NCIMB 9240 / NCTC 8049) protein is Bifunctional protein FolD.